We begin with the raw amino-acid sequence, 346 residues long: Short-wave-sensitive opsin 1 (346 aa).

Over 1–31 (MSGEDEFYLFQNISSVGPWDGPQYHIAPVWA) the chain is Extracellular. N-linked (GlcNAc...) asparagine glycosylation occurs at Asn-12. Residues 32–56 (FHLQAAFMGFVFFAGTPLNATVLVA) traverse the membrane as a helical segment. Residues 57 to 68 (TLHYKKLRQPLN) lie on the Cytoplasmic side of the membrane. The chain crosses the membrane as a helical span at residues 69–94 (YILVNVSLGGFLFCIFSVFTVFIASC). Topologically, residues 95–108 (HGYFLFGRHVCALE) are extracellular. Cysteines 105 and 182 form a disulfide. Residues 109–128 (AFLGSVAGLVTGWSLAFLAF) traverse the membrane as a helical segment. Topologically, residues 129–147 (ERYLVICKPFGNIRFNSKH) are cytoplasmic. Residues 148–171 (ALTVVLITWTIGIGVSIPPFFGWS) form a helical membrane-spanning segment. Topologically, residues 172 to 197 (RFIPEGLQCSCGPDWYTVGTKYRSEH) are extracellular. A helical membrane pass occupies residues 198–225 (YTWFLFIFCFIIPLSLICFSYFQLLRTL). At 226–247 (RAVAAQQQESATTQKAEREVSH) the chain is on the cytoplasmic side. The chain crosses the membrane as a helical span at residues 248-271 (MVVVMVGSFCLCYVPYAALAMYMV). The Extracellular portion of the chain corresponds to 272 to 279 (NNRNHGLY). Residues 280 to 304 (LRLVTIPAFFSKSSCVYNPIIYCFM) traverse the membrane as a helical segment. Lys-291 bears the N6-(retinylidene)lysine mark. Over 305–346 (NKQFRACILEMVCRKPMTDESDMSGSQKTEVSTVSSSKVGPH) the chain is Cytoplasmic. Residues 322 to 346 (TDESDMSGSQKTEVSTVSSSKVGPH) are disordered. Over residues 330 to 346 (SQKTEVSTVSSSKVGPH) the composition is skewed to low complexity.

The protein belongs to the G-protein coupled receptor 1 family. Opsin subfamily. Post-translationally, phosphorylated on some or all of the serine and threonine residues present in the C-terminal region. As to expression, expressed in cone photoreceptor cells.

It is found in the cell membrane. It localises to the photoreceptor inner segment. The protein localises to the cell projection. Its subcellular location is the cilium. The protein resides in the photoreceptor outer segment. It is found in the cytoplasm. It localises to the perinuclear region. Its function is as follows. Visual pigments are the light-absorbing molecules that mediate vision. They consist of an apoprotein, opsin, covalently linked to cis-retinal. Required for the maintenance of cone outer segment organization in the ventral retina, but not essential for the maintenance of functioning cone photoreceptors. Involved in ensuring correct abundance and localization of retinal membrane proteins. May increase spectral sensitivity in dim light. This is Short-wave-sensitive opsin 1 (Opn1sw) from Rattus norvegicus (Rat).